A 522-amino-acid polypeptide reads, in one-letter code: Glutamate--cysteine ligase (522 aa).

This sequence belongs to the glutamate--cysteine ligase type 1 family. Type 1 subfamily.

The catalysed reaction is L-cysteine + L-glutamate + ATP = gamma-L-glutamyl-L-cysteine + ADP + phosphate + H(+). Its pathway is sulfur metabolism; glutathione biosynthesis; glutathione from L-cysteine and L-glutamate: step 1/2. The protein is Glutamate--cysteine ligase of Shewanella halifaxensis (strain HAW-EB4).